Reading from the N-terminus, the 357-residue chain is Phenylalanine--tRNA ligase alpha subunit (357 aa).

Glu258 contacts Mg(2+).

Belongs to the class-II aminoacyl-tRNA synthetase family. Phe-tRNA synthetase alpha subunit type 1 subfamily. Tetramer of two alpha and two beta subunits. The cofactor is Mg(2+).

Its subcellular location is the cytoplasm. The catalysed reaction is tRNA(Phe) + L-phenylalanine + ATP = L-phenylalanyl-tRNA(Phe) + AMP + diphosphate + H(+). This chain is Phenylalanine--tRNA ligase alpha subunit, found in Caulobacter vibrioides (strain ATCC 19089 / CIP 103742 / CB 15) (Caulobacter crescentus).